The sequence spans 174 residues: Gamma-crystallin A (174 aa).

2 Beta/gamma crystallin 'Greek key' domains span residues G2 to S40 and G41 to P83. The interval Y84–S87 is connecting peptide. 2 Beta/gamma crystallin 'Greek key' domains span residues H88–E128 and G129–M171.

This sequence belongs to the beta/gamma-crystallin family.

Its function is as follows. Crystallins are the dominant structural components of the vertebrate eye lens. This is Gamma-crystallin A (Cryga) from Mus musculus (Mouse).